A 319-amino-acid polypeptide reads, in one-letter code: Aspartate carbamoyltransferase catalytic subunit (319 aa).

Arg65 and Thr66 together coordinate carbamoyl phosphate. Position 93 (Lys93) interacts with L-aspartate. Positions 115, 143, and 146 each coordinate carbamoyl phosphate. Arg176 and Arg230 together coordinate L-aspartate. The carbamoyl phosphate site is built by Gly271 and Pro272.

This sequence belongs to the aspartate/ornithine carbamoyltransferase superfamily. ATCase family. As to quaternary structure, heterododecamer (2C3:3R2) of six catalytic PyrB chains organized as two trimers (C3), and six regulatory PyrI chains organized as three dimers (R2).

It catalyses the reaction carbamoyl phosphate + L-aspartate = N-carbamoyl-L-aspartate + phosphate + H(+). Its pathway is pyrimidine metabolism; UMP biosynthesis via de novo pathway; (S)-dihydroorotate from bicarbonate: step 2/3. In terms of biological role, catalyzes the condensation of carbamoyl phosphate and aspartate to form carbamoyl aspartate and inorganic phosphate, the committed step in the de novo pyrimidine nucleotide biosynthesis pathway. The sequence is that of Aspartate carbamoyltransferase catalytic subunit from Chelativorans sp. (strain BNC1).